The following is a 339-amino-acid chain: Anthranilate phosphoribosyltransferase (339 aa).

5-phospho-alpha-D-ribose 1-diphosphate contacts are provided by residues Gly81, 84–85, 91–94, 109–117, and Ser121; these read GD, NIST, and KHGNRAASS. Position 81 (Gly81) interacts with anthranilate. Ser93 provides a ligand contact to Mg(2+). Residue Asn112 participates in anthranilate binding. Arg167 lines the anthranilate pocket. Asp226 and Glu227 together coordinate Mg(2+).

It belongs to the anthranilate phosphoribosyltransferase family. In terms of assembly, homodimer. Mg(2+) serves as cofactor.

The catalysed reaction is N-(5-phospho-beta-D-ribosyl)anthranilate + diphosphate = 5-phospho-alpha-D-ribose 1-diphosphate + anthranilate. The protein operates within amino-acid biosynthesis; L-tryptophan biosynthesis; L-tryptophan from chorismate: step 2/5. In terms of biological role, catalyzes the transfer of the phosphoribosyl group of 5-phosphorylribose-1-pyrophosphate (PRPP) to anthranilate to yield N-(5'-phosphoribosyl)-anthranilate (PRA). The sequence is that of Anthranilate phosphoribosyltransferase from Maricaulis maris (strain MCS10) (Caulobacter maris).